Reading from the N-terminus, the 315-residue chain is Methionyl-tRNA formyltransferase (315 aa).

113–116 contributes to the (6S)-5,6,7,8-tetrahydrofolate binding site; sequence SLLP.

The protein belongs to the Fmt family.

It carries out the reaction L-methionyl-tRNA(fMet) + (6R)-10-formyltetrahydrofolate = N-formyl-L-methionyl-tRNA(fMet) + (6S)-5,6,7,8-tetrahydrofolate + H(+). Attaches a formyl group to the free amino group of methionyl-tRNA(fMet). The formyl group appears to play a dual role in the initiator identity of N-formylmethionyl-tRNA by promoting its recognition by IF2 and preventing the misappropriation of this tRNA by the elongation apparatus. In Salmonella gallinarum (strain 287/91 / NCTC 13346), this protein is Methionyl-tRNA formyltransferase.